The chain runs to 566 residues: Proline--tRNA ligase (566 aa).

It belongs to the class-II aminoacyl-tRNA synthetase family. ProS type 1 subfamily. In terms of assembly, homodimer.

The protein localises to the cytoplasm. It catalyses the reaction tRNA(Pro) + L-proline + ATP = L-prolyl-tRNA(Pro) + AMP + diphosphate. Functionally, catalyzes the attachment of proline to tRNA(Pro) in a two-step reaction: proline is first activated by ATP to form Pro-AMP and then transferred to the acceptor end of tRNA(Pro). As ProRS can inadvertently accommodate and process non-cognate amino acids such as alanine and cysteine, to avoid such errors it has two additional distinct editing activities against alanine. One activity is designated as 'pretransfer' editing and involves the tRNA(Pro)-independent hydrolysis of activated Ala-AMP. The other activity is designated 'posttransfer' editing and involves deacylation of mischarged Ala-tRNA(Pro). The misacylated Cys-tRNA(Pro) is not edited by ProRS. The chain is Proline--tRNA ligase from Bacillus cereus (strain G9842).